A 196-amino-acid chain; its full sequence is ATP-dependent Clp protease proteolytic subunit (196 aa).

Serine 101 (nucleophile) is an active-site residue. Histidine 126 is a catalytic residue.

Belongs to the peptidase S14 family. Component of the chloroplastic Clp protease core complex.

Its subcellular location is the plastid. The protein localises to the chloroplast stroma. It carries out the reaction Hydrolysis of proteins to small peptides in the presence of ATP and magnesium. alpha-casein is the usual test substrate. In the absence of ATP, only oligopeptides shorter than five residues are hydrolyzed (such as succinyl-Leu-Tyr-|-NHMec, and Leu-Tyr-Leu-|-Tyr-Trp, in which cleavage of the -Tyr-|-Leu- and -Tyr-|-Trp bonds also occurs).. In terms of biological role, cleaves peptides in various proteins in a process that requires ATP hydrolysis. Has a chymotrypsin-like activity. Plays a major role in the degradation of misfolded proteins. The protein is ATP-dependent Clp protease proteolytic subunit of Gossypium barbadense (Sea Island cotton).